A 454-amino-acid chain; its full sequence is (Z)-3-hexen-1-ol acetyltransferase (454 aa).

Residues histidine 174 and aspartate 389 each act as proton acceptor in the active site.

It belongs to the plant acyltransferase family. In terms of tissue distribution, expressed in leaves and stems. Lower levels in flowers and barely detected in roots and siliques.

The enzyme catalyses (3Z)-hex-3-en-1-ol + acetyl-CoA = (3Z)-hex-3-en-1-yl acetate + CoA. Inhibited by magnesium, calcium, cobalt, zinc and copper. Acyltransferase involved in the production of green leaf volatiles (GLVs). Uses acetyl-CoA as substrate, but not malonyl-CoA or benzoyl-CoA. Prefers primary, medium-chain-length, aliphatic alcohols. In Arabidopsis thaliana (Mouse-ear cress), this protein is (Z)-3-hexen-1-ol acetyltransferase (CHAT).